Here is a 405-residue protein sequence, read N- to C-terminus: MRGRRGDRMTINIQEHMAINVCPGPIRPIRQISDYFPRRGPGPEGGGGGGGTGCGEAPAHLAPLALAPPAALLGATTPDDGAEVDSYDSDDTTALGTLEFDLLYDQASCMLHCRILRAKGLKPMDFNGLADPYVKLHLLPGACKANKLKTKTQRNTLNPVWNEELTYSGITDDDITHKVLRISVCDEDKLSHNEFIGEIRVPLRRLKPSQKKHFNICLERQVPLPSPSSMSAALRGISCYLKELEQAEQGPGLLEERGRILLSLSYSSRRHGLLVGIVRCAHLAAMDVNGYSDPYVKTYLRPDVDKKSKHKTCVKKKTLNPEFNEEFFYEIELSTLATKTLEVTVWDYDIGKSNDFIGGVSLGPGARGEAQKHWNDCLHQPDTALERWHTLTSELPPAAGAYPLA.

The tract at residues Met-1–Ala-94 is interaction with UNC13D and DYNLT1. Residues Asp-34–Cys-54 form a disordered region. Gly residues predominate over residues Gly-42–Cys-54. C2 domains follow at residues Ala-94 to Ile-216 and Glu-256 to His-389. The Ca(2+) site is built by Asp-125, Asp-131, Asp-186, Asp-188, Asp-287, Asp-293, Asp-347, Asp-349, and Asp-355. The interaction with UNC13D stretch occupies residues Arg-220 to Ala-405.

As to quaternary structure, interacts (via N-terminus) with UNC13A. Interacts with cytoplasmic dynein light chain DYNLT1. Interacts with UNC13D. Requires Ca(2+) as cofactor. As to expression, brain and mast cells.

The protein localises to the cytoplasmic vesicle. It localises to the secretory vesicle. It is found in the synaptic vesicle membrane. Its subcellular location is the synapse. The protein resides in the synaptosome. The protein localises to the lysosome. In terms of biological role, calcium sensor which most probably regulates fusion of vesicles with membranes. Binds calcium and phospholipids. May be involved in calcium dependent neurotransmitter release through the interaction with UNC13A. May be involved in calcium-dependent spontaneous release of neurotransmitter in absence of action potentials in neuronal cells. Regulates Ca(2+)-dependent secretory lysosome exocytosis in mast cells. The protein is Double C2-like domain-containing protein alpha (Doc2a) of Mus musculus (Mouse).